A 109-amino-acid chain; its full sequence is ATPase inhibitor, mitochondrial (109 aa).

The N-terminal 22 residues, 1–22, are a transit peptide targeting the mitochondrion; sequence MAGSSSLLRAGIRNVLLMQMRR. Positions 27–56 are N-terminal inhibitory region; that stretch reads LGELGKGAGKGGGGGGSVREAGGAFGKRQA. A disordered region spans residues 27-109; that stretch reads LGELGKGAGK…KSKIKKLNDD (83 aa). Residues 30–43 are compositionally biased toward gly residues; the sequence is LGKGAGKGGGGGGS. Basic and acidic residues-rich tracts occupy residues 55 to 69 and 77 to 98; these read QAAE…KEQE and HHEE…EIER. Residues 71–109 adopt a coiled-coil conformation; that stretch reads IASLRKHHEEEIRHHKGEIERLQKEIERHKSKIKKLNDD. The antiparallel alpha-helical coiled coil region stretch occupies residues 78–109; sequence HEEEIRHHKGEIERLQKEIERHKSKIKKLNDD. Basic residues predominate over residues 99 to 109; it reads HKSKIKKLNDD.

It belongs to the ATPase inhibitor family. As to quaternary structure, homodimer; represents the active form and is present at a pH value below 6.5. Homotetramer; represents the inactive form and is present at a pH value above 7.0.

The protein resides in the mitochondrion. Functionally, endogenous F(1)F(o)-ATPase inhibitor limiting ATP depletion when the mitochondrial membrane potential falls below a threshold and the F(1)F(o)-ATP synthase starts hydrolyzing ATP to pump protons out of the mitochondrial matrix. Required to avoid the consumption of cellular ATP when the F(1)F(o)-ATP synthase enzyme acts as an ATP hydrolase. Indirectly acts as a regulator of heme synthesis in erythroid tissues: regulates heme synthesis by modulating the mitochondrial pH and redox potential, allowing fech to efficiently catalyze the incorporation of iron into protoporphyrin IX to produce heme. The polypeptide is ATPase inhibitor, mitochondrial (Xenopus tropicalis (Western clawed frog)).